Here is a 321-residue protein sequence, read N- to C-terminus: MGCVSSKSTTVLSPQTSFNEASRTSFRALPGPSQRQLEVYDQCLIGAARWPDDSSKSNTPENRAYCQSMYNSIRSAGDEISRGGITSFEELWGRATEWRLSKLQRGEPLYSAFASERTSDTDAVTPLVKPYKSVLARVVDHEDAHDEIMQDNLFGDLNVKVYRQTAYLHGNVIPLNTFRVATDTEYLRDRVAHLRTELGAKALKQHLQRYNPDRIDHTNASYLPIIKDHLNDLYRQAISSDLSQAELISLIARTHWWAASAMPDQRGSAAKAEFAARAIASAHGIELPPFRNGNVSDIEAMLSGEEEFVEKYRSLLDSDCF.

The protein to avirulence C protein of the same strain.

It localises to the secreted. In Pseudomonas savastanoi pv. glycinea (Pseudomonas syringae pv. glycinea), this protein is Avirulence protein B (avrB).